Consider the following 364-residue polypeptide: Phosphoserine aminotransferase (364 aa).

Arginine 46 provides a ligand contact to L-glutamate. Pyridoxal 5'-phosphate contacts are provided by residues 80 to 81 (AR), tryptophan 106, threonine 157, aspartate 176, and glutamine 199. The residue at position 200 (lysine 200) is an N6-(pyridoxal phosphate)lysine. A pyridoxal 5'-phosphate-binding site is contributed by 241–242 (NT).

The protein belongs to the class-V pyridoxal-phosphate-dependent aminotransferase family. SerC subfamily. As to quaternary structure, homodimer. Pyridoxal 5'-phosphate is required as a cofactor.

The protein resides in the cytoplasm. It catalyses the reaction O-phospho-L-serine + 2-oxoglutarate = 3-phosphooxypyruvate + L-glutamate. The enzyme catalyses 4-(phosphooxy)-L-threonine + 2-oxoglutarate = (R)-3-hydroxy-2-oxo-4-phosphooxybutanoate + L-glutamate. The protein operates within amino-acid biosynthesis; L-serine biosynthesis; L-serine from 3-phospho-D-glycerate: step 2/3. It functions in the pathway cofactor biosynthesis; pyridoxine 5'-phosphate biosynthesis; pyridoxine 5'-phosphate from D-erythrose 4-phosphate: step 3/5. Catalyzes the reversible conversion of 3-phosphohydroxypyruvate to phosphoserine and of 3-hydroxy-2-oxo-4-phosphonooxybutanoate to phosphohydroxythreonine. This is Phosphoserine aminotransferase from Vibrio vulnificus (strain YJ016).